Reading from the N-terminus, the 485-residue chain is Dual specificity protein phosphatase CDC14B (485 aa).

The disordered stretch occupies residues 1–38 (MKRKSERRSAWATAPPCSRRSSSSSPGVKKSRSSTPQE). The short motif at 1 to 54 (MKRKSERRSAWATAPPCSRRSSSSSPGVKKSRSSTPQELHRLEQQDDLYLDITD) is the Nucleolar localization signal element. Residues 15–28 (PPCSRRSSSSSPGV) are compositionally biased toward low complexity. The segment at 44 to 198 (QQDDLYLDIT…AMQYGFFNFN (155 aa)) is a. A linker region spans residues 199–212 (SFNLDEYEHYEKAE). The interval 213-379 (NGDFNWIIPE…EGDYFRQKLR (167 aa)) is b. A Tyrosine-protein phosphatase domain is found at 215-374 (DFNWIIPERF…SSLWLEGDYF (160 aa)). Residue Cys-314 is the Phosphocysteine intermediate of the active site. Residues 402–424 (LNGLENQDNQEPEPYSDDDEVSG) form a disordered region. Residues 409–422 (DNQEPEPYSDDDEV) show a composition bias toward acidic residues.

The protein belongs to the protein-tyrosine phosphatase family. Non-receptor class CDC14 subfamily. As to quaternary structure, interacts with FZR1/CDH1.

The protein resides in the nucleus. It localises to the nucleolus. Its subcellular location is the nucleoplasm. It carries out the reaction O-phospho-L-tyrosyl-[protein] + H2O = L-tyrosyl-[protein] + phosphate. The catalysed reaction is O-phospho-L-seryl-[protein] + H2O = L-seryl-[protein] + phosphate. It catalyses the reaction O-phospho-L-threonyl-[protein] + H2O = L-threonyl-[protein] + phosphate. Dual-specificity phosphatase involved in DNA damage response. Essential regulator of the G2 DNA damage checkpoint: following DNA damage, translocates to the nucleus and dephosphorylates FZR1/CDH1, a key activator of the anaphase promoting complex/cyclosome (APC/C). Dephosphorylates SIRT2 around early anaphase. Dephosphorylation of FZR1/CDH1 activates the APC/C, leading to the ubiquitination of PLK1, preventing entry into mitosis. Preferentially dephosphorylates proteins modified by proline-directed kinases. The sequence is that of Dual specificity protein phosphatase CDC14B (Cdc14b) from Mus musculus (Mouse).